The chain runs to 776 residues: Protein translocase subunit SecA 2 (776 aa).

ATP is bound by residues glutamine 80, glycine 98–threonine 102, and aspartate 486.

This sequence belongs to the SecA family. Monomer and homodimer. Part of the essential Sec protein translocation apparatus which comprises SecA, SecYEG and auxiliary proteins SecDF. Other proteins may also be involved.

It is found in the cell membrane. Its subcellular location is the cytoplasm. The catalysed reaction is ATP + H2O + cellular proteinSide 1 = ADP + phosphate + cellular proteinSide 2.. Functionally, part of the Sec protein translocase complex. Interacts with the SecYEG preprotein conducting channel. Has a central role in coupling the hydrolysis of ATP to the transfer of proteins into and across the cell membrane, serving as an ATP-driven molecular motor driving the stepwise translocation of polypeptide chains across the membrane. This Listeria monocytogenes serotype 1/2a (strain 10403S) protein is Protein translocase subunit SecA 2.